A 449-amino-acid polypeptide reads, in one-letter code: UNC93-like protein MFSD11 (449 aa).

Residues 8–28 (LFNIIILGVAFMFMFTAFQTC) form a helical membrane-spanning segment. N-linked (GlcNAc...) asparagine glycosylation is present at N40. 5 helical membrane-spanning segments follow: residues 53-73 (AIIY…VAIV), 74-94 (GPQL…AVFI), 96-116 (PFPW…AVLW), 138-158 (IFWA…YFAW), and 170-190 (RTVF…FFLI). S204 carries the post-translational modification Phosphoserine. The next 6 membrane-spanning stretches (helical) occupy residues 239-259 (MLLL…FSGV), 277-297 (LIGL…SLFG), 309-329 (PVVL…FLNM), 359-379 (FLLG…LGFL), 385-405 (APAF…AFFY), and 410-430 (LLHW…ISFF).

The protein belongs to the unc-93 family.

It is found in the membrane. This chain is UNC93-like protein MFSD11 (MFSD11), found in Macaca fascicularis (Crab-eating macaque).